A 197-amino-acid polypeptide reads, in one-letter code: Probable UbiX-like flavin prenyltransferase (197 aa).

Residues G9 to T11, S36, S87 to T90, and R122 contribute to the FMN site.

Belongs to the UbiX/PAD1 family. YclB subfamily. Homododecamer.

The catalysed reaction is dimethylallyl phosphate + FMNH2 = prenylated FMNH2 + phosphate. Flavin prenyltransferase that catalyzes the synthesis of the prenylated FMN cofactor (prenyl-FMN) for phenolic acid decarboxylase C. Involved in the decarboxylation and detoxification of phenolic derivatives under both aerobic and anaerobic conditions. The protein is Probable UbiX-like flavin prenyltransferase (ecdB) of Escherichia coli O111:H-.